The primary structure comprises 286 residues: GTP cyclohydrolase MptA (286 aa).

This sequence belongs to the GTP cyclohydrolase IV family. As to quaternary structure, homodimer. Fe(2+) serves as cofactor.

It catalyses the reaction GTP + H2O = 7,8-dihydroneopterin 2',3'-cyclic phosphate + formate + diphosphate + H(+). It functions in the pathway cofactor biosynthesis; 5,6,7,8-tetrahydromethanopterin biosynthesis. Converts GTP to 7,8-dihydro-D-neopterin 2',3'-cyclic phosphate, the first intermediate in the biosynthesis of coenzyme methanopterin. This chain is GTP cyclohydrolase MptA, found in Thermoplasma acidophilum (strain ATCC 25905 / DSM 1728 / JCM 9062 / NBRC 15155 / AMRC-C165).